The sequence spans 186 residues: Elongation factor P (186 aa).

This sequence belongs to the elongation factor P family.

The protein localises to the cytoplasm. The protein operates within protein biosynthesis; polypeptide chain elongation. Involved in peptide bond synthesis. Stimulates efficient translation and peptide-bond synthesis on native or reconstituted 70S ribosomes in vitro. Probably functions indirectly by altering the affinity of the ribosome for aminoacyl-tRNA, thus increasing their reactivity as acceptors for peptidyl transferase. The chain is Elongation factor P from Streptococcus sanguinis (strain SK36).